The sequence spans 504 residues: 6,7,8-trihydroxycoumarin synthase (504 aa).

A helical transmembrane segment spans residues 1-21 (MEPVFLFLILAFPIASVYLLF). The segment at 363–368 (PAPVLV) is substrate specificity. A heme-binding site is contributed by C444.

It belongs to the cytochrome P450 family. Heme serves as cofactor.

The protein localises to the microsome membrane. It functions in the pathway secondary metabolite biosynthesis. Functionally, involved in the biosynthesis of coumarins and furanocoumarins (FCs), natural products required for defense responses against attacks by predators with potential medical and agroindustrial usages such as anticoagulant, rodenticide and artificial vanilla substitutes. Able to catalyze the hydroxylation of esculetin to produce 6,7,8-trihydroxycoumarin. The polypeptide is 6,7,8-trihydroxycoumarin synthase (Pastinaca sativa (Wild parsnip)).